Here is a 299-residue protein sequence, read N- to C-terminus: MAADAPHPAFEGYATEAVPQAAVGSPGKDGVLELTFERTADGTTLVHDYATVPFHISGTLGYDPLPEADTVFIQSPTGGVAQGDRHDVSITVGDEAVAHVSTQSSTKVQTMTCNYAAADTTLSVGAGGHLDYVPEPTILHADSRYLQELSVDLAPGATAVVSDVVVPGRLARGERFEFERYLSRVRATGPDGHLFEDATHLTPGDEDPTAPGVLGEFTVYGTTFVLAPDHDEAELSDALHAVVTDGDARAGATALPNGAGVAVRALGDRAETVQATLHAAWDHARIELLDAPAPSGRKY.

This sequence belongs to the UreD family. In terms of assembly, ureD, UreF and UreG form a complex that acts as a GTP-hydrolysis-dependent molecular chaperone, activating the urease apoprotein by helping to assemble the nickel containing metallocenter of UreC. The UreE protein probably delivers the nickel.

Its subcellular location is the cytoplasm. Its function is as follows. Required for maturation of urease via the functional incorporation of the urease nickel metallocenter. The sequence is that of Urease accessory protein UreD from Haloarcula marismortui (strain ATCC 43049 / DSM 3752 / JCM 8966 / VKM B-1809) (Halobacterium marismortui).